Here is a 930-residue protein sequence, read N- to C-terminus: Translation initiation factor IF-2 (930 aa).

Residues Phe-50–Val-67 are compositionally biased toward low complexity. 2 disordered regions span residues Phe-50–Glu-217 and Glu-260–Pro-346. 2 stretches are compositionally biased toward basic and acidic residues: residues Ser-68 to Pro-90 and Phe-110 to Arg-125. Over residues Lys-129 to Arg-141 the composition is skewed to low complexity. 2 stretches are compositionally biased toward basic and acidic residues: residues Arg-157 to Lys-167 and Val-262 to Arg-295. A compositionally biased stretch (low complexity) spans Asn-309–Asn-318. Residues Val-337–Pro-346 are compositionally biased toward basic and acidic residues. In terms of domain architecture, tr-type G spans Glu-432–Glu-599. Residues Gly-441–Thr-448 form a G1 region. Gly-441–Thr-448 serves as a coordination point for GTP. Residues Gly-466–His-470 form a G2 region. The segment at Asp-487–Gly-490 is G3. GTP is bound by residues Asp-487–His-491 and Asn-541–Asp-544. A G4 region spans residues Asn-541–Asp-544. The tract at residues Ser-577–Lys-579 is G5.

It belongs to the TRAFAC class translation factor GTPase superfamily. Classic translation factor GTPase family. IF-2 subfamily.

The protein localises to the cytoplasm. One of the essential components for the initiation of protein synthesis. Protects formylmethionyl-tRNA from spontaneous hydrolysis and promotes its binding to the 30S ribosomal subunits. Also involved in the hydrolysis of GTP during the formation of the 70S ribosomal complex. This chain is Translation initiation factor IF-2, found in Streptococcus pneumoniae (strain Taiwan19F-14).